We begin with the raw amino-acid sequence, 268 residues long: Exodeoxyribonuclease III (268 aa).

Residue E34 coordinates Mg(2+). Y109 is a catalytic residue. The Mg(2+) site is built by D151, N153, and D258. Catalysis depends on D151, which acts as the Proton donor/acceptor.

It belongs to the DNA repair enzymes AP/ExoA family. As to quaternary structure, monomer. Mg(2+) serves as cofactor. The cofactor is Mn(2+).

It carries out the reaction Exonucleolytic cleavage in the 3'- to 5'-direction to yield nucleoside 5'-phosphates.. Functionally, major apurinic-apyrimidinic endonuclease of E.coli. It removes the damaged DNA at cytosines and guanines by cleaving on the 3'-side of the AP site by a beta-elimination reaction. It exhibits 3'-5'-exonuclease, 3'-phosphomonoesterase, 3'-repair diesterase and ribonuclease H activities. The chain is Exodeoxyribonuclease III (xthA) from Salmonella typhi.